The following is a 132-amino-acid chain: MATPRSAKKAVRKSGSKSAKCGLIFPVGRVGGMMRRGQYARRIGASGAVYLAAVLEYLTAELLELSVKAAAQSGKKRCRLNPRTVMLAARHDDDIGTLLKNVTLSHSGVVPNISKAMAKKKGGKKGKATPSA.

Belongs to the histone H2A family. The nucleosome is a histone octamer containing two molecules each of H2A, H2B, H3 and H4 assembled in one H3-H4 heterotetramer and two H2A-H2B heterodimers. The octamer wraps approximately 147 bp of DNA.

Its subcellular location is the nucleus. It localises to the chromosome. Core component of nucleosome. Nucleosomes wrap and compact DNA into chromatin, limiting DNA accessibility to the cellular machineries which require DNA as a template. Histones thereby play a central role in transcription regulation, DNA repair, DNA replication and chromosomal stability. DNA accessibility is regulated via a complex set of post-translational modifications of histones, also called histone code, and nucleosome remodeling. This chain is Histone H2A.1, found in Leishmania infantum.